A 343-amino-acid polypeptide reads, in one-letter code: Anthranilate phosphoribosyltransferase (343 aa).

5-phospho-alpha-D-ribose 1-diphosphate-binding positions include glycine 84, 87–88 (GD), threonine 92, 94–97 (NIST), 112–120 (KHGNRGVSS), and serine 124. An anthranilate-binding site is contributed by glycine 84. Position 96 (serine 96) interacts with Mg(2+). Asparagine 115 serves as a coordination point for anthranilate. Arginine 170 lines the anthranilate pocket. Mg(2+) is bound by residues aspartate 229 and glutamate 230.

The protein belongs to the anthranilate phosphoribosyltransferase family. As to quaternary structure, homodimer. Mg(2+) is required as a cofactor.

It carries out the reaction N-(5-phospho-beta-D-ribosyl)anthranilate + diphosphate = 5-phospho-alpha-D-ribose 1-diphosphate + anthranilate. It participates in amino-acid biosynthesis; L-tryptophan biosynthesis; L-tryptophan from chorismate: step 2/5. Catalyzes the transfer of the phosphoribosyl group of 5-phosphorylribose-1-pyrophosphate (PRPP) to anthranilate to yield N-(5'-phosphoribosyl)-anthranilate (PRA). This is Anthranilate phosphoribosyltransferase from Burkholderia thailandensis (strain ATCC 700388 / DSM 13276 / CCUG 48851 / CIP 106301 / E264).